The following is a 120-amino-acid chain: Dense granule protein 5 (120 aa).

A signal peptide spans 1-25 (MASVKRVVVAVMIVNVLALIFVGVA). Residues 27-59 (STRDVGSGGDDSEGARGREQQQVQQHEQNEDRS) are disordered. Residues 76 to 93 (AVGLAAAVVAVVSLLRLL) traverse the membrane as a helical segment. Positions 100 to 109 (AIQEESKESA) are enriched in basic and acidic residues. The tract at residues 100–120 (AIQEESKESATAEEEEVAEEE) is disordered. Positions 110–120 (TAEEEEVAEEE) are enriched in acidic residues.

The protein localises to the secreted. Its subcellular location is the parasitophorous vacuole lumen. It is found in the parasitophorous vacuole membrane. It localises to the cytoplasmic vesicle. The protein resides in the secretory vesicle. Its function is as follows. Plays a role in the function of the cyst and parasitophorous vacuole membranes and therefore in host-parasite interactions. The protein is Dense granule protein 5 (GRA5) of Toxoplasma gondii.